Here is a 349-residue protein sequence, read N- to C-terminus: Ion-translocating oxidoreductase complex subunit D (349 aa).

Helical transmembrane passes span Cys-36–Ser-56, Ser-77–Val-99, and Ala-124–Ala-144. Thr-185 carries the FMN phosphoryl threonine modification. A run of 5 helical transmembrane segments spans residues Ser-212–Leu-232, Trp-239–Leu-259, Ala-265–Thr-285, Ala-291–Ile-311, and Gly-315–Ile-335.

Belongs to the NqrB/RnfD family. The complex is composed of six subunits: RnfA, RnfB, RnfC, RnfD, RnfE and RnfG. FMN serves as cofactor.

It is found in the cell inner membrane. Functionally, part of a membrane-bound complex that couples electron transfer with translocation of ions across the membrane. This is Ion-translocating oxidoreductase complex subunit D from Shewanella oneidensis (strain ATCC 700550 / JCM 31522 / CIP 106686 / LMG 19005 / NCIMB 14063 / MR-1).